The following is a 469-amino-acid chain: UDP-N-acetylmuramate--L-alanine ligase (469 aa).

122-128 (GTHGKTT) serves as a coordination point for ATP.

The protein belongs to the MurCDEF family.

It is found in the cytoplasm. The enzyme catalyses UDP-N-acetyl-alpha-D-muramate + L-alanine + ATP = UDP-N-acetyl-alpha-D-muramoyl-L-alanine + ADP + phosphate + H(+). It functions in the pathway cell wall biogenesis; peptidoglycan biosynthesis. In terms of biological role, cell wall formation. This chain is UDP-N-acetylmuramate--L-alanine ligase, found in Legionella pneumophila (strain Paris).